Here is a 621-residue protein sequence, read N- to C-terminus: Methionine--tRNA ligase (621 aa).

Residues 11–21 (PYANGPRHIGH) carry the 'HIGH' region motif. Zn(2+)-binding residues include cysteine 143, cysteine 146, cysteine 156, and cysteine 159. Residues 347–351 (KFSSS) carry the 'KMSKS' region motif. Residue serine 350 participates in ATP binding.

It belongs to the class-I aminoacyl-tRNA synthetase family. MetG type 1 subfamily. In terms of assembly, monomer. Requires Zn(2+) as cofactor.

It localises to the cytoplasm. The enzyme catalyses tRNA(Met) + L-methionine + ATP = L-methionyl-tRNA(Met) + AMP + diphosphate. In terms of biological role, is required not only for elongation of protein synthesis but also for the initiation of all mRNA translation through initiator tRNA(fMet) aminoacylation. This is Methionine--tRNA ligase from Bifidobacterium longum subsp. infantis (strain ATCC 15697 / DSM 20088 / JCM 1222 / NCTC 11817 / S12).